Reading from the N-terminus, the 728-residue chain is Catalase-peroxidase 1 (728 aa).

The segment at residues 91 to 218 is a cross-link (tryptophyl-tyrosyl-methioninium (Trp-Tyr) (with M-244)); that stretch reads WHSAGTYRIA…LAAVQMGLIY (128 aa). Catalysis depends on H92, which acts as the Proton acceptor. A cross-link (tryptophyl-tyrosyl-methioninium (Tyr-Met) (with W-91)) is located at residues 218–244; sequence YVNPEGPDGNPDPVAAARDIRDTFARM. Position 259 (H259) interacts with heme b.

This sequence belongs to the peroxidase family. Peroxidase/catalase subfamily. In terms of assembly, homodimer or homotetramer. It depends on heme b as a cofactor. Post-translationally, formation of the three residue Trp-Tyr-Met cross-link is important for the catalase, but not the peroxidase activity of the enzyme.

It carries out the reaction H2O2 + AH2 = A + 2 H2O. The catalysed reaction is 2 H2O2 = O2 + 2 H2O. Bifunctional enzyme with both catalase and broad-spectrum peroxidase activity. The chain is Catalase-peroxidase 1 from Burkholderia ambifaria (strain ATCC BAA-244 / DSM 16087 / CCUG 44356 / LMG 19182 / AMMD) (Burkholderia cepacia (strain AMMD)).